The primary structure comprises 308 residues: Phenylcoumaran benzylic ether reductase Betv6 (308 aa).

Residues 11 to 17 (GGTGYIG), Arg-36, and Lys-45 contribute to the NADP(+) site. Lys-133 acts as the Proton acceptor in catalysis. Arg-137 is an NADP(+) binding site.

This sequence belongs to the NmrA-type oxidoreductase family. Isoflavone reductase subfamily.

It catalyses the reaction (-)-dehydrodiconiferyl alcohol + NADPH + H(+) = (S)-isodihydrodehydrodiconiferyl alcohol + NADP(+). The catalysed reaction is (+)-dehydrodiconiferyl alcohol + NADPH + H(+) = (R)-isodihydrodehydrodiconiferyl alcohol + NADP(+). In terms of biological role, oxidoreductase involved in lignan biosynthesis. Catalyzes the NADPH-dependent reduction of phenylcoumaran benzylic ethers. Converts dehydrodiconiferyl alcohol (DDC) to isodihydrodehydrodiconiferyl alcohol (IDDDC). The sequence is that of Phenylcoumaran benzylic ether reductase Betv6 from Betula pendula (European white birch).